The chain runs to 130 residues: MKLVYLVLGAVALLLLGGPDSVLSSSSGNLHTFVGCAVREFTFMAKKPGCRGLRITTDACWGRCETWEKPILEPPYIEAYHRVCTYNETRQVTVKLPNCAPGVDPFYTYPMAVRCDCGACSTATTECETI.

The signal sequence occupies residues 1 to 24 (MKLVYLVLGAVALLLLGGPDSVLS). 5 disulfides stabilise this stretch: cysteine 36–cysteine 84, cysteine 50–cysteine 99, cysteine 60–cysteine 115, cysteine 64–cysteine 117, and cysteine 120–cysteine 127. An N-linked (GlcNAc...) asparagine glycan is attached at asparagine 87.

The protein belongs to the glycoprotein hormones subunit beta family. Heterodimer with GPHA2; this heterodimer interacts with thyroid-stimulating hormone receptor (TSHR), and hence stimulates cAMP production. In terms of processing, N-glycosylated. As to expression, expressed in the anterior lobe of pituitary.

The protein localises to the secreted. Its function is as follows. Functions as a heterodimeric glycoprotein hormone with GPHA2 able to bind and activate the thyroid-stimulating hormone receptor (TSHR), leading to increased cAMP production. Plays a central role in controlling thyroid cell metabolism. The chain is Glycoprotein hormone beta-5 (Gphb5) from Mus musculus (Mouse).